The chain runs to 135 residues: Ig heavy chain V region XIG14 (135 aa).

The signal sequence occupies residues 1–18; it reads DFIIFFIFMFFSPSCILS. One can recognise an Ig-like domain in the interval 20–128; the sequence is TLQESGPGTV…GYNFDYWGQG (109 aa).

In Xenopus laevis (African clawed frog), this protein is Ig heavy chain V region XIG14.